Reading from the N-terminus, the 601-residue chain is Regulatory protein BlaR1 (601 aa).

Residues 1–8 (MSSSFFIP) are Extracellular-facing. The helical transmembrane segment at 9 to 26 (FLVSQILLSLFFSIIILI) threads the bilayer. At 27–35 (KKLLRTQIT) the chain is on the cytoplasmic side. A helical transmembrane segment spans residues 36–52 (VGTHYYISVISLLALIA). Over 53 to 115 (PFIPFHFLKS…EQSSSKMIDS (63 aa)) the chain is Extracellular. The helical transmembrane segment at 116-133 (AFFAVWILGVAVMLLATL) threads the bilayer. Residues 134-322 (YSNLKIGKIK…QTASPLLKAK (189 aa)) are Cytoplasmic-facing. Residues 323–339 (SALVFTLVLGAILAGTP) form a helical membrane-spanning segment. At 340–601 (SVSILAMQKE…KKGIYPSVSR (262 aa)) the chain is on the extracellular side. A beta-lactam antibiotic sensor domain region spans residues 354-601 (PGTNVEYEDY…KKGIYPSVSR (248 aa)). Ser402 functions as the Acyl-ester intermediate in the catalytic mechanism. The residue at position 405 (Lys405) is an N6-carboxylysine.

The protein belongs to the peptidase M56 family. Post-translationally, carboxylation occurs on two lysine residues. Carboxylation at 'Lys-405' activates the active site serine residue for acylation. On acylation, the lysine side chain experiences a spontaneous decarboxylation that entraps the sensor in its activated state.

It is found in the cell membrane. Integral membrane protein involved in sensing of the presence of beta-lactam antibiotics and transduction of the information to the cytoplasm. Mechanistically, activation of the signal transducer involves acylation of a serine in the C-terminal sensor domain upon binding of the beta-lactam antibiotic. In turn, a conformational change occurs and the signal is transmitted from the cell surface to the cytoplasm. There, the zinc protease domain is activated and initiates autoproteolysis as well as cleavage of the transcriptional repressor BlaI leading to derepression of antibiotic resistance genes. The protein is Regulatory protein BlaR1 (blaR1) of Bacillus licheniformis.